Reading from the N-terminus, the 235-residue chain is MNTTPDTPTPRALRELTPLEARILGVLVEKQHTVPDTYPLSLNALTAGCNQKTARAPVMNVTDDEVTTALDALKHLSLVFEGSSSRVPRFEHNLNRVLGIPSQAIALLTVLMLRGPQTAAELRLNSARLHGFADISSVEAFLDELATREPPLVVRLPRAPGARENRWMHLLCGDVNVGEFAGADGGGAEAVAPSEFEALKAEQKRLADEVARLNALVRRMASELGIDADAPGDAN.

This sequence belongs to the UPF0502 family.

The sequence is that of UPF0502 protein Bmul_3231/BMULJ_05293 from Burkholderia multivorans (strain ATCC 17616 / 249).